The chain runs to 178 residues: Co-chaperone protein p23-1 (178 aa).

In terms of domain architecture, CS spans 2 to 91 (SRHPTVKWAQ…AESKWWNRLT (90 aa)). Acidic residues-rich tracts occupy residues 112–126 (DDED…DFGD) and 136–155 (DTDE…EGET). Residues 112–178 (DDEDKGGEGD…DEEGVNAKKD (67 aa)) are disordered. Residues 157 to 178 (AETKEKKIDGEKDEEGVNAKKD) are compositionally biased toward basic and acidic residues.

The protein belongs to the p23/wos2 family. As to quaternary structure, interacts with HSP90 in an ATP-dependent manner.

Functionally, acts as a co-chaperone for HSP90. In Brassica napus (Rape), this protein is Co-chaperone protein p23-1.